The primary structure comprises 427 residues: Citrate synthase (427 aa).

Catalysis depends on residues His306 and Asp363.

The protein belongs to the citrate synthase family. In terms of assembly, homohexamer.

It carries out the reaction oxaloacetate + acetyl-CoA + H2O = citrate + CoA + H(+). Its pathway is carbohydrate metabolism; tricarboxylic acid cycle; isocitrate from oxaloacetate: step 1/2. With respect to regulation, allosterically inhibited by NADH. The polypeptide is Citrate synthase (gltA) (Salmonella typhimurium (strain LT2 / SGSC1412 / ATCC 700720)).